Here is a 131-residue protein sequence, read N- to C-terminus: Profilin-10 (131 aa).

Residues C13 and C115 are joined by a disulfide bond. The Involved in PIP2 interaction signature appears at 81 to 97 (AVIRGKKGSGGITVKKT). The residue at position 111 (T111) is a Phosphothreonine.

It belongs to the profilin family. In terms of assembly, occurs in many kinds of cells as a complex with monomeric actin in a 1:1 ratio. Post-translationally, phosphorylated by MAP kinases.

It is found in the cytoplasm. The protein resides in the cytoskeleton. Binds to actin and affects the structure of the cytoskeleton. At high concentrations, profilin prevents the polymerization of actin, whereas it enhances it at low concentrations. This chain is Profilin-10, found in Zea mays (Maize).